A 300-amino-acid polypeptide reads, in one-letter code: Acetaldehyde dehydrogenase (300 aa).

11–14 (SGNI) is an NAD(+) binding site. Cys129 (acyl-thioester intermediate) is an active-site residue. Residues 160–168 (SVGPGTRQN) and Asn271 each bind NAD(+).

The protein belongs to the acetaldehyde dehydrogenase family.

The catalysed reaction is acetaldehyde + NAD(+) + CoA = acetyl-CoA + NADH + H(+). The polypeptide is Acetaldehyde dehydrogenase (mhpF) (Pseudoalteromonas translucida (strain TAC 125)).